Here is a 377-residue protein sequence, read N- to C-terminus: MAKRDFYEVLGVERGASEADLKKAYRRLAMKYHPDRNPGDKEAEDKFKEANEAYEVLSDASKRAAYDQYGHAGVDPNMGGGAGAGFGGASFSDIFGDVFSDFFGGGGARGGSRGGAQRGADLRYTLDLDLEEAVRGTTVTIRVPTLVGCKTCNGSGAKPGTTPVTCTTCGGIGQVRMQQGFFSVQQTCPRCHGTGKMISDPCGSCHGQGRVEEQKTLSVKVPAGVDTGDRIRLTGEGEAGSMGGPAGDLYVVVNVREHPIFQRDGKHLYCEVPISFADAALGGELEVPTLDGRVKLKIPESTQTGKLFRLRGKGVAPVRGGGAGDLMCKVVVETPVNLDKRQRELLEEFRKSLQSDTSHSPKASGWFEGMKRFFDDL.

The J domain occupies 5–70 (DFYEVLGVER…SKRAAYDQYG (66 aa)). The segment at 136–214 (GTTVTIRVPT…CHGQGRVEEQ (79 aa)) adopts a CR-type zinc-finger fold. Cys149, Cys152, Cys166, Cys169, Cys188, Cys191, Cys202, and Cys205 together coordinate Zn(2+). 4 CXXCXGXG motif repeats span residues 149-156 (CKTCNGSG), 166-173 (CTTCGGIG), 188-195 (CPRCHGTG), and 202-209 (CGSCHGQG).

It belongs to the DnaJ family. Homodimer. Requires Zn(2+) as cofactor.

Its subcellular location is the cytoplasm. Its function is as follows. Participates actively in the response to hyperosmotic and heat shock by preventing the aggregation of stress-denatured proteins and by disaggregating proteins, also in an autonomous, DnaK-independent fashion. Unfolded proteins bind initially to DnaJ; upon interaction with the DnaJ-bound protein, DnaK hydrolyzes its bound ATP, resulting in the formation of a stable complex. GrpE releases ADP from DnaK; ATP binding to DnaK triggers the release of the substrate protein, thus completing the reaction cycle. Several rounds of ATP-dependent interactions between DnaJ, DnaK and GrpE are required for fully efficient folding. Also involved, together with DnaK and GrpE, in the DNA replication of plasmids through activation of initiation proteins. The chain is Chaperone protein DnaJ from Pseudomonas aeruginosa (strain LESB58).